The sequence spans 270 residues: Tetraspanin-18 (270 aa).

The Cytoplasmic portion of the chain corresponds to 1–15 (MRRNCCHVSFASTLK). A helical transmembrane segment spans residues 16-36 (ILNFVQAFIGVSIIIYSIWML). Over 37 to 99 (HEYSRHLPVD…LRSLDLPAPW (63 aa)) the chain is Extracellular. Residues 100–120 (FIYSFMAVGILVCIVTFIGFI) form a helical membrane-spanning segment. Residues 121–132 (AAEAINGCCLCF) are Cytoplasmic-facing. Residues 133-153 (YSILKTLLILLEAALVAYIAI) traverse the membrane as a helical segment. Topologically, residues 154 to 183 (DRHWEKDLPYDPTGELSSLRAFIEENIDIC) are extracellular. Residues 184–204 (KWVGIAVVAVQLLSLLLAMVL) form a helical membrane-spanning segment. Over 205-270 (RAMVSTPKPE…NQSPPVNPKG (66 aa)) the chain is Cytoplasmic. Positions 212–249 (KPELDEEEDDENPRSRTWDPLLGPQGNQAPAGSSKIEN) are disordered. Polar residues predominate over residues 236–249 (QGNQAPAGSSKIEN). S245 carries the post-translational modification Phosphoserine.

It belongs to the tetraspanin (TM4SF) family. As to quaternary structure, homodimer. Constituent of tobamovirus replication complex. In terms of tissue distribution, expressed in rosette leaves.

Its subcellular location is the membrane. The protein localises to the vacuole membrane. Functionally, may be involved in the regulation of cell differentiation. Promotes intracellular multiplication of tobamoviruses, probably being a component of the replication complex. The protein is Tetraspanin-18 (TOM2AH2) of Arabidopsis thaliana (Mouse-ear cress).